The primary structure comprises 174 residues: ATP-dependent protease subunit HslV (174 aa).

Residue T2 is part of the active site. Na(+)-binding residues include G157, C160, and T163.

The protein belongs to the peptidase T1B family. HslV subfamily. In terms of assembly, a double ring-shaped homohexamer of HslV is capped on each side by a ring-shaped HslU homohexamer. The assembly of the HslU/HslV complex is dependent on binding of ATP.

The protein localises to the cytoplasm. It carries out the reaction ATP-dependent cleavage of peptide bonds with broad specificity.. Its activity is regulated as follows. Allosterically activated by HslU binding. Functionally, protease subunit of a proteasome-like degradation complex believed to be a general protein degrading machinery. In Shewanella loihica (strain ATCC BAA-1088 / PV-4), this protein is ATP-dependent protease subunit HslV.